The following is a 233-amino-acid chain: Orotidine 5'-phosphate decarboxylase (233 aa).

Substrate is bound by residues D9, K31, 58 to 67, T120, R182, Q191, G211, and R212; that span reads DLKLHDIPNT. K60 serves as the catalytic Proton donor.

Belongs to the OMP decarboxylase family. Type 1 subfamily. As to quaternary structure, homodimer.

It carries out the reaction orotidine 5'-phosphate + H(+) = UMP + CO2. It participates in pyrimidine metabolism; UMP biosynthesis via de novo pathway; UMP from orotate: step 2/2. Its function is as follows. Catalyzes the decarboxylation of orotidine 5'-monophosphate (OMP) to uridine 5'-monophosphate (UMP). This Listeria welshimeri serovar 6b (strain ATCC 35897 / DSM 20650 / CCUG 15529 / CIP 8149 / NCTC 11857 / SLCC 5334 / V8) protein is Orotidine 5'-phosphate decarboxylase.